A 387-amino-acid polypeptide reads, in one-letter code: Chaperone protein DnaJ (387 aa).

Residues 6-70 (DYYETLGVSR…QKRAAYDQYG (65 aa)) enclose the J domain. Residues 143–225 (GKDTKISYDR…CHGTGHEQER (83 aa)) form a CR-type zinc finger. Cys-156, Cys-159, Cys-173, Cys-176, Cys-199, Cys-202, Cys-213, and Cys-216 together coordinate Zn(2+). CXXCXGXG motif repeat units lie at residues 156–163 (CHTCNGSG), 173–180 (CHKCHGSG), 199–206 (CDVCGGTG), and 213–220 (CPTCHGTG).

It belongs to the DnaJ family. Homodimer. Zn(2+) serves as cofactor.

Its subcellular location is the cytoplasm. Participates actively in the response to hyperosmotic and heat shock by preventing the aggregation of stress-denatured proteins and by disaggregating proteins, also in an autonomous, DnaK-independent fashion. Unfolded proteins bind initially to DnaJ; upon interaction with the DnaJ-bound protein, DnaK hydrolyzes its bound ATP, resulting in the formation of a stable complex. GrpE releases ADP from DnaK; ATP binding to DnaK triggers the release of the substrate protein, thus completing the reaction cycle. Several rounds of ATP-dependent interactions between DnaJ, DnaK and GrpE are required for fully efficient folding. Also involved, together with DnaK and GrpE, in the DNA replication of plasmids through activation of initiation proteins. The protein is Chaperone protein DnaJ of Lacticaseibacillus paracasei (strain ATCC 334 / BCRC 17002 / CCUG 31169 / CIP 107868 / KCTC 3260 / NRRL B-441) (Lactobacillus paracasei).